The following is a 243-amino-acid chain: MTKLFIPYIMGNKSFIKNMKILDENGADIIEIGVPFSDPVADGPIIMEAGNRAIKQGVTINYIFNELSNNKDEINCKYVLMTYYNIIVSYGEEAFFKECEKVGVYGVIIPDLPYELTQKLKHKISKFDVKVISLISMTANDDRIKEIVKHAEGFIYTVTMNATTGKNGTFHPQLKDKLKHLKAHTDIPVVAGFGIRTKEHIKDLATVADGVVIGSEIVKRFCQDNNEDTIHYLKQVRETLDTL.

Residues Glu-31 and Asp-42 each act as proton acceptor in the active site.

The protein belongs to the TrpA family. Tetramer of two alpha and two beta chains.

The catalysed reaction is (1S,2R)-1-C-(indol-3-yl)glycerol 3-phosphate + L-serine = D-glyceraldehyde 3-phosphate + L-tryptophan + H2O. Its pathway is amino-acid biosynthesis; L-tryptophan biosynthesis; L-tryptophan from chorismate: step 5/5. Functionally, the alpha subunit is responsible for the aldol cleavage of indoleglycerol phosphate to indole and glyceraldehyde 3-phosphate. This is Tryptophan synthase alpha chain from Staphylococcus haemolyticus (strain JCSC1435).